The following is a 273-amino-acid chain: 2,3,4,5-tetrahydropyridine-2,6-dicarboxylate N-succinyltransferase (273 aa).

Residues R105 and D142 each coordinate substrate.

It belongs to the transferase hexapeptide repeat family. In terms of assembly, homotrimer.

Its subcellular location is the cytoplasm. The catalysed reaction is (S)-2,3,4,5-tetrahydrodipicolinate + succinyl-CoA + H2O = (S)-2-succinylamino-6-oxoheptanedioate + CoA. The protein operates within amino-acid biosynthesis; L-lysine biosynthesis via DAP pathway; LL-2,6-diaminopimelate from (S)-tetrahydrodipicolinate (succinylase route): step 1/3. The chain is 2,3,4,5-tetrahydropyridine-2,6-dicarboxylate N-succinyltransferase from Bordetella bronchiseptica (strain ATCC BAA-588 / NCTC 13252 / RB50) (Alcaligenes bronchisepticus).